A 587-amino-acid polypeptide reads, in one-letter code: Lamin-B1 (587 aa).

A compositionally biased stretch (polar residues) spans 1 to 11; that stretch reads MATATPVQQRA. The tract at residues 1–29 is disordered; sequence MATATPVQQRAGSRASAPATPFSPTRLSR. Residue A2 is modified to N-acetylalanine. The interval 2-34 is head; the sequence is ATATPVQQRAGSRASAPATPFSPTRLSRLQEKE. Phosphothreonine is present on residues T3 and T5. Omega-N-methylarginine is present on R14. S16 carries the post-translational modification Phosphoserine. Phosphothreonine is present on T20. Phosphoserine is present on S23. Phosphothreonine is present on T25. A Phosphoserine modification is found at S28. In terms of domain architecture, IF rod spans 32–388; the sequence is EKEELRELND…KLLEGEEERL (357 aa). A coil 1A region spans residues 35–69; that stretch reads ELRELNDRLAVYIDKVRSLETENSALQLQVTEREE. The tract at residues 70 to 81 is linker 1; the sequence is VRGRELTGLKAL. The tract at residues 82–215 is coil 1B; sequence YETELADARR…EFRKNMYEEE (134 aa). K102 is covalently cross-linked (Glycyl lysine isopeptide (Lys-Gly) (interchain with G-Cter in SUMO2)). Position 111 is an N6-acetyllysine (K111). A Glycyl lysine isopeptide (Lys-Gly) (interchain with G-Cter in SUMO2) cross-link involves residue K123. Residue S126 is modified to Phosphoserine. K145 participates in a covalent cross-link: Glycyl lysine isopeptide (Lys-Gly) (interchain with G-Cter in SUMO2). Residue K157 is modified to N6-acetyllysine; alternate. K157 is covalently cross-linked (Glycyl lysine isopeptide (Lys-Gly) (interchain with G-Cter in SUMO2); alternate). S158 carries the post-translational modification Phosphoserine. K181 participates in a covalent cross-link: Glycyl lysine isopeptide (Lys-Gly) (interchain with G-Cter in SUMO2). Phosphoserine is present on residues S200 and S232. The tract at residues 216–243 is linker 2; sequence INETRRKHETRLVEVDSGRQIEYEYKLA. Glycyl lysine isopeptide (Lys-Gly) (interchain with G-Cter in SUMO2) cross-links involve residues K241 and K261. The interval 244–386 is coil 2; the sequence is QALHEMREQH…YRKLLEGEEE (143 aa). K271 carries the N6-acetyllysine; alternate modification. Residue K271 forms a Glycyl lysine isopeptide (Lys-Gly) (interchain with G-Cter in SUMO2); alternate linkage. S278 and S302 each carry phosphoserine. K312 participates in a covalent cross-link: Glycyl lysine isopeptide (Lys-Gly) (interchain with G-Cter in SUMO2). The residue at position 330 (K330) is an N6-acetyllysine; alternate. K330 is covalently cross-linked (Glycyl lysine isopeptide (Lys-Gly) (interchain with G-Cter in SUMO2); alternate). 2 positions are modified to phosphoserine: S375 and S393. The tract at residues 387 to 587 is tail; it reads RLKLSPSPSS…RASNKSCAIM (201 aa). A compositionally biased stretch (low complexity) spans 390 to 409; sequence LSPSPSSRVTVSRASSSRSV. Residues 390–432 are disordered; the sequence is LSPSPSSRVTVSRASSSRSVRTTRGKRKRVDVEESEASSSVSI. O-linked (GlcNAc) threonine glycosylation is present at T399. R413 carries the omega-N-methylarginine modification. The Nuclear localization signal motif lies at 415 to 420; it reads KRKRVD. The LTD domain occupies 430–546; it reads VSISHSASAT…EEVAQRSTVF (117 aa). N6-acetyllysine is present on K483. K532 is covalently cross-linked (Glycyl lysine isopeptide (Lys-Gly) (interchain with G-Cter in SUMO2)). Position 534 is a phosphoserine (S534). Residue K547 forms a Glycyl lysine isopeptide (Lys-Gly) (interchain with G-Cter in SUMO2) linkage. The segment at 550–587 is disordered; that stretch reads IPEEEEEEEEEPIGVPLEEERFHQQGTPRASNKSCAIM. A compositionally biased stretch (acidic residues) spans 551–561; that stretch reads PEEEEEEEEEP. Polar residues predominate over residues 573-587; it reads QQGTPRASNKSCAIM. T576 carries the phosphothreonine modification. C584 bears the Cysteine methyl ester mark. A lipid anchor (S-farnesyl cysteine) is attached at C584. The propeptide at 585 to 587 is removed in mature form; sequence AIM.

This sequence belongs to the intermediate filament family. As to quaternary structure, homodimer. Lamin dimers then assemble into dimeric head-to-tail polymers. Ultimately, two head-to-tail polymers assemble laterally into a protofilament with a uniformly shaped rod of 3.5 nm in diameter. Interacts with SPAG4 and SEPT12. In terms of processing, B-type lamins undergo a series of modifications, such as farnesylation and phosphorylation. Increased phosphorylation of the lamins occurs before envelope disintegration and probably plays a role in regulating lamin associations. Post-translationally, phosphorylation plays a key role in lamin organization, subcellular localization and nuclear envelope disintegration. Phosphorylation by CDK1 at Ser-23 and Ser-393 at the onset of mitosis drives lamin disassembly and nuclear envelope breakdown.

The protein localises to the nucleus lamina. Functionally, lamins are intermediate filament proteins that assemble into a filamentous meshwork, and which constitute the major components of the nuclear lamina, a fibrous layer on the nucleoplasmic side of the inner nuclear membrane. Lamins provide a framework for the nuclear envelope, bridging the nuclear envelope and chromatin, thereby playing an important role in nuclear assembly, chromatin organization, nuclear membrane and telomere dynamics. The structural integrity of the lamina is strictly controlled by the cell cycle, as seen by the disintegration and formation of the nuclear envelope in prophase and telophase, respectively. This Rattus norvegicus (Rat) protein is Lamin-B1 (Lmnb1).